We begin with the raw amino-acid sequence, 101 residues long: Enhancer of yellow 2 transcription factor (101 aa).

This sequence belongs to the ENY2 family. As to quaternary structure, component of the nuclear pore complex (NPC)-associated AMEX complex (anchoring and mRNA export complex), composed of at least e(y)2 and xmas-2. Component of the SAGA transcription coactivator-HAT complexes, at least composed of Ada2b, e(y)2, Pcaf/Gcn5, Taf10 and Nipped-A/Trrap. Within the SAGA complex, e(y)2, Sgf11, and not/nonstop form an additional subcomplex of SAGA called the DUB module (deubiquitination module). Component of the THO complex, composed of at least e(y)2, HPR1, THO2, THOC5, THOC6 and THOC7. Interacts with e(y)1. Interacts with su(Hw) (via zinc fingers). Interacts with xmas-2; required for localization to the nuclear periphery. Interacts with the nuclear pore complex (NPC).

The protein resides in the nucleus. Its subcellular location is the nucleoplasm. The protein localises to the cytoplasm. Its function is as follows. Involved in mRNA export coupled transcription activation by association with both the AMEX and the SAGA complexes. The SAGA complex is a multiprotein complex that activates transcription by remodeling chromatin and mediating histone acetylation and deubiquitination. Within the SAGA complex, participates in a subcomplex that specifically deubiquitinates histone H2B. The SAGA complex is recruited to specific gene promoters by activators, where it is required for transcription. Required for nuclear receptor-mediated transactivation. Involved in transcription elongation by recruiting the THO complex onto nascent mRNA. The AMEX complex functions in docking export-competent ribonucleoprotein particles (mRNPs) to the nuclear entrance of the nuclear pore complex (nuclear basket). AMEX participates in mRNA export and accurate chromatin positioning in the nucleus by tethering genes to the nuclear periphery. The protein is Enhancer of yellow 2 transcription factor of Drosophila simulans (Fruit fly).